We begin with the raw amino-acid sequence, 530 residues long: UPF0422 protein lpg2959 (530 aa).

Positions methionine 1 to alanine 19 are cleaved as a signal peptide. Residues aspartate 20–alanine 66 are a coiled coil. A disordered region spans residues leucine 50–alanine 81. Residues glutamine 63–proline 75 show a composition bias toward low complexity.

The protein belongs to the UPF0422 family.

This is UPF0422 protein lpg2959 from Legionella pneumophila subsp. pneumophila (strain Philadelphia 1 / ATCC 33152 / DSM 7513).